The sequence spans 442 residues: Protein bangles and beads (442 aa).

Residues 47 to 442 are disordered; the sequence is AVEPAPLKPE…SEESSESKEN (396 aa). 3 stretches are compositionally biased toward basic and acidic residues: residues 55-67, 114-125, and 133-146; these read PEAEKPAETKTIE, PEKKTLPEEAKP, and EAEKKQEKTARTEA. The span at 159–172 shows a compositional bias: low complexity; it reads AIEQAPEAPAANAE. 2 stretches are compositionally biased toward basic and acidic residues: residues 177 to 194 and 204 to 240; these read VVDEVKPQEPKIDAKSAE and AEKETPVPEQPARQERINEIEQKDAKKDAAVAEEPAK. 2 stretches are compositionally biased toward low complexity: residues 241-255 and 272-288; these read AAEATPTAAPEAATK and SSPAAAAASPAAQAAQA. The segment covering 329–339 has biased composition (basic and acidic residues); it reads EAVKEQEKEQP. Over residues 357 to 376 the composition is skewed to low complexity; sequence TAAPAGAPEPTAAVAPAAVP. Positions 408–442 are enriched in basic and acidic residues; sequence EPKKSSEEKSDKSESKVDESSESKESEESSESKEN. Residues Ser430, Ser433, Ser436, and Ser437 each carry the phosphoserine modification.

As to expression, expressed in the embryonic CNS, in sets of cells that are segmentally reiterated along the periphery of the nervous system.

May play an important role during development. The sequence is that of Protein bangles and beads (bnb) from Drosophila melanogaster (Fruit fly).